Reading from the N-terminus, the 441-residue chain is Mitochondrial distribution and morphology protein 12 (441 aa).

The 441-residue stretch at Met1–Val441 folds into the SMP-LTD domain. The tract at residues Thr180 to Glu289 is disordered. Polar residues-rich tracts occupy residues Ser226 to Thr245 and Ser253 to Gly263.

Belongs to the MDM12 family. In terms of assembly, component of the ER-mitochondria encounter structure (ERMES) or MDM complex, composed of MMM1, MDM10, MDM12 and MDM34. An MMM1 homodimer associates with one molecule of MDM12 on each side in a pairwise head-to-tail manner, and the SMP-LTD domains of MMM1 and MDM12 generate a continuous hydrophobic tunnel for phospholipid trafficking.

It is found in the mitochondrion outer membrane. The protein resides in the endoplasmic reticulum membrane. Its function is as follows. Component of the ERMES/MDM complex, which serves as a molecular tether to connect the endoplasmic reticulum (ER) and mitochondria. Components of this complex are involved in the control of mitochondrial shape and protein biogenesis, and function in nonvesicular lipid trafficking between the ER and mitochondria. MDM12 is required for the interaction of the ER-resident membrane protein MMM1 and the outer mitochondrial membrane-resident beta-barrel protein MDM10. The MDM12-MMM1 subcomplex functions in the major beta-barrel assembly pathway that is responsible for biogenesis of all mitochondrial outer membrane beta-barrel proteins, and acts in a late step after the SAM complex. The MDM10-MDM12-MMM1 subcomplex further acts in the TOM40-specific pathway after the action of the MDM12-MMM1 complex. Essential for establishing and maintaining the structure of mitochondria and maintenance of mtDNA nucleoids. This chain is Mitochondrial distribution and morphology protein 12, found in Paracoccidioides brasiliensis (strain Pb18).